Consider the following 398-residue polypeptide: S-adenosylmethionine synthase (398 aa).

His-16 lines the ATP pocket. A Mg(2+)-binding site is contributed by Asp-18. Glu-51 provides a ligand contact to K(+). Residues Glu-64 and Gln-108 each contribute to the L-methionine site. The flexible loop stretch occupies residues 108–118; sequence QSADIAQGVDA. ATP is bound by residues 176–178, 242–243, Asp-251, 257–258, Ala-274, and Lys-278; these read DSK, KF, and RK. Residue Asp-251 participates in L-methionine binding. Lys-282 provides a ligand contact to L-methionine.

It belongs to the AdoMet synthase family. As to quaternary structure, homotetramer; dimer of dimers. Mg(2+) is required as a cofactor. K(+) serves as cofactor.

It is found in the cytoplasm. The catalysed reaction is L-methionine + ATP + H2O = S-adenosyl-L-methionine + phosphate + diphosphate. The protein operates within amino-acid biosynthesis; S-adenosyl-L-methionine biosynthesis; S-adenosyl-L-methionine from L-methionine: step 1/1. Functionally, catalyzes the formation of S-adenosylmethionine (AdoMet) from methionine and ATP. The overall synthetic reaction is composed of two sequential steps, AdoMet formation and the subsequent tripolyphosphate hydrolysis which occurs prior to release of AdoMet from the enzyme. This is S-adenosylmethionine synthase from Rhodopseudomonas palustris (strain BisB5).